Consider the following 124-residue polypeptide: MVTINQLVRHPRSMKVAKSNVPALEGCPQKRGVCTRVYTTTPKKPNSALRKVCRVRLTNGFEVTSYIGGEGHNLQEHSVILIRGGRVKDLPGVRYHTLRGTLDCSGVKDRKKGRSKYGVKKQKV.

Asp89 is subject to 3-methylthioaspartic acid.

This sequence belongs to the universal ribosomal protein uS12 family. In terms of assembly, part of the 30S ribosomal subunit. Contacts proteins S8 and S17. May interact with IF1 in the 30S initiation complex.

In terms of biological role, with S4 and S5 plays an important role in translational accuracy. Its function is as follows. Interacts with and stabilizes bases of the 16S rRNA that are involved in tRNA selection in the A site and with the mRNA backbone. Located at the interface of the 30S and 50S subunits, it traverses the body of the 30S subunit contacting proteins on the other side and probably holding the rRNA structure together. The combined cluster of proteins S8, S12 and S17 appears to hold together the shoulder and platform of the 30S subunit. In Baumannia cicadellinicola subsp. Homalodisca coagulata, this protein is Small ribosomal subunit protein uS12.